Here is a 314-residue protein sequence, read N- to C-terminus: Ribosomal RNA small subunit methyltransferase H (314 aa).

Residues 36-38 (GGH), aspartate 56, phenylalanine 80, aspartate 102, and glutamine 109 contribute to the S-adenosyl-L-methionine site.

The protein belongs to the methyltransferase superfamily. RsmH family.

The protein localises to the cytoplasm. It carries out the reaction cytidine(1402) in 16S rRNA + S-adenosyl-L-methionine = N(4)-methylcytidine(1402) in 16S rRNA + S-adenosyl-L-homocysteine + H(+). In terms of biological role, specifically methylates the N4 position of cytidine in position 1402 (C1402) of 16S rRNA. This Citrobacter koseri (strain ATCC BAA-895 / CDC 4225-83 / SGSC4696) protein is Ribosomal RNA small subunit methyltransferase H.